We begin with the raw amino-acid sequence, 97 residues long: Small cell adhesion glycoprotein (97 aa).

The Extracellular portion of the chain corresponds to 1–36; that stretch reads MNNLPATPSPEELMTTPVFQAPETMSPQAEEASTAL. An O-linked (GalNAc...) threonine glycan is attached at Thr7. Ser9 carries an O-linked (GalNAc...) serine glycan. 3 O-linked (GalNAc...) threonine glycosylation sites follow: Thr15, Thr16, and Thr24. A glycan (O-linked (GalNAc...) serine) is linked at Ser26. A helical; Signal-anchor for type III membrane protein transmembrane segment spans residues 37–57; that stretch reads IAVVITVVFLTLLSVVTLIFF. Over 58–97 the chain is Cytoplasmic; sequence YLYKNKGSYVTYEPAEGEPSAILQMETDSAKGKEKEEYFI.

It belongs to the SMAGP family. In terms of processing, O-glycosylated. The O-glycan is modified with sialic acid residues. In terms of tissue distribution, detected in brain (at protein level). Highly expressed in kidney and placenta. Detected in skin, breast, heart, lung, liver, prostate, spleen, small intestine, colon and stomach.

The protein localises to the cell membrane. It localises to the cytoplasmic vesicle membrane. In terms of biological role, may play a role in epithelial cell-cell contacts. May play a role in tumor invasiveness and metastasis formation. The polypeptide is Small cell adhesion glycoprotein (Smagp) (Rattus norvegicus (Rat)).